The sequence spans 593 residues: Serine/threonine-protein kinase SSN3 (593 aa).

The region spanning 90-489 (YEIIGYIAAG…AIDALDHVYF (400 aa)) is the Protein kinase domain. 96 to 104 (IAAGTYGKV) is an ATP binding site. Residues 161-199 (KPSHKRFTPPNNSNSTQIRSNSGSETNVRINSSSITNNS) form a disordered region. The segment covering 169 to 185 (PPNNSNSTQIRSNSGSE) has biased composition (polar residues). Residues 186-199 (TNVRINSSSITNNS) are compositionally biased toward low complexity. Lys-211 contacts ATP. Residue Asp-312 is the Proton acceptor of the active site. 2 disordered regions span residues 517–551 (DNDI…NMNG) and 569–593 (AAVS…KKRK). The span at 518-536 (NDITNVGNDNNQANHSQKQ) shows a compositional bias: polar residues. The segment covering 540–551 (GNNNNKNGNMNG) has biased composition (low complexity). Residues 573–585 (GNGNNPTSNTATG) show a composition bias toward polar residues.

Belongs to the protein kinase superfamily. CMGC Ser/Thr protein kinase family. CDC2/CDKX subfamily. As to quaternary structure, component of the SRB8-11 complex, a regulatory module of the Mediator complex. Mg(2+) serves as cofactor.

It localises to the nucleus. It catalyses the reaction L-seryl-[protein] + ATP = O-phospho-L-seryl-[protein] + ADP + H(+). The enzyme catalyses L-threonyl-[protein] + ATP = O-phospho-L-threonyl-[protein] + ADP + H(+). It carries out the reaction [DNA-directed RNA polymerase] + ATP = phospho-[DNA-directed RNA polymerase] + ADP + H(+). Component of the SRB8-11 complex. The SRB8-11 complex is a regulatory module of the Mediator complex which is itself involved in regulation of basal and activated RNA polymerase II-dependent transcription. The SRB8-11 complex may be involved in the transcriptional repression of a subset of genes regulated by Mediator. It may inhibit the association of the Mediator complex with RNA polymerase II to form the holoenzyme complex. The SRB8-11 complex phosphorylates the C-terminal domain (CTD) of the largest subunit of RNA polymerase II. This Kluyveromyces lactis (strain ATCC 8585 / CBS 2359 / DSM 70799 / NBRC 1267 / NRRL Y-1140 / WM37) (Yeast) protein is Serine/threonine-protein kinase SSN3 (SSN3).